Here is a 446-residue protein sequence, read N- to C-terminus: Probable tRNA modification GTPase MnmE (446 aa).

3 residues coordinate (6S)-5-formyl-5,6,7,8-tetrahydrofolate: arginine 28, glutamate 87, and arginine 126. One can recognise a TrmE-type G domain in the interval 218–373 (GIQVALLGPA…LKQLIWQQAT (156 aa)). K(+) is bound at residue asparagine 228. GTP contacts are provided by residues 228–233 (NAGKST), 247–253 (TPIAGTT), and 272–275 (DTAG). Mg(2+) is bound at residue serine 232. K(+)-binding residues include threonine 247, isoleucine 249, and threonine 252. Threonine 253 serves as a coordination point for Mg(2+). (6S)-5-formyl-5,6,7,8-tetrahydrofolate is bound at residue lysine 446.

Belongs to the TRAFAC class TrmE-Era-EngA-EngB-Septin-like GTPase superfamily. TrmE GTPase family. The cofactor is K(+).

Its subcellular location is the plastid. It localises to the chloroplast. Functionally, exhibits a very high intrinsic GTPase hydrolysis rate. Involved in the addition of a carboxymethylaminomethyl (cmnm) group at the wobble position (U34) of certain tRNAs, forming tRNA-cmnm(5)s(2)U34. In Cyanidioschyzon merolae (strain NIES-3377 / 10D) (Unicellular red alga), this protein is Probable tRNA modification GTPase MnmE.